The primary structure comprises 113 residues: Large ribosomal subunit protein uL22 (113 aa).

This sequence belongs to the universal ribosomal protein uL22 family. As to quaternary structure, part of the 50S ribosomal subunit.

Its function is as follows. This protein binds specifically to 23S rRNA; its binding is stimulated by other ribosomal proteins, e.g. L4, L17, and L20. It is important during the early stages of 50S assembly. It makes multiple contacts with different domains of the 23S rRNA in the assembled 50S subunit and ribosome. Functionally, the globular domain of the protein is located near the polypeptide exit tunnel on the outside of the subunit, while an extended beta-hairpin is found that lines the wall of the exit tunnel in the center of the 70S ribosome. In Carboxydothermus hydrogenoformans (strain ATCC BAA-161 / DSM 6008 / Z-2901), this protein is Large ribosomal subunit protein uL22.